The chain runs to 87 residues: UPF0473 protein Dred_0776 (87 aa).

Belongs to the UPF0473 family.

The polypeptide is UPF0473 protein Dred_0776 (Desulforamulus reducens (strain ATCC BAA-1160 / DSM 100696 / MI-1) (Desulfotomaculum reducens)).